The following is a 226-amino-acid chain: PKHD-type hydroxylase Nwi_0701 (226 aa).

A Fe2OG dioxygenase domain is found at 78 to 178 (KVLPPRFNRY…RLAAFFWTQS (101 aa)). Fe cation is bound by residues H96, D98, and H159. 2-oxoglutarate is bound at residue R169.

It depends on Fe(2+) as a cofactor. Requires L-ascorbate as cofactor.

This chain is PKHD-type hydroxylase Nwi_0701, found in Nitrobacter winogradskyi (strain ATCC 25391 / DSM 10237 / CIP 104748 / NCIMB 11846 / Nb-255).